Here is a 321-residue protein sequence, read N- to C-terminus: Malate dehydrogenase (321 aa).

Residues 10–15 (GSGMIG) and Asp-34 each bind NAD(+). Positions 83 and 89 each coordinate substrate. Residues Asn-96 and 119–121 (ITN) each bind NAD(+). Substrate-binding residues include Asn-121 and Arg-152. His-176 acts as the Proton acceptor in catalysis.

Belongs to the LDH/MDH superfamily. MDH type 3 family.

The catalysed reaction is (S)-malate + NAD(+) = oxaloacetate + NADH + H(+). Catalyzes the reversible oxidation of malate to oxaloacetate. This is Malate dehydrogenase from Chelativorans sp. (strain BNC1).